We begin with the raw amino-acid sequence, 124 residues long: uncharacterized protein (124 aa).

In terms of assembly, interacts with dil1.

This is an uncharacterized protein from Schizosaccharomyces pombe (strain 972 / ATCC 24843) (Fission yeast).